A 452-amino-acid chain; its full sequence is Pup--protein ligase (452 aa).

Glu-9 lines the Mg(2+) pocket. Arg-53 provides a ligand contact to ATP. Mg(2+) is bound at residue Tyr-55. The active-site Proton acceptor is the Asp-57. Glu-63 lines the Mg(2+) pocket. 2 residues coordinate ATP: Thr-66 and Trp-419.

The protein belongs to the Pup ligase/Pup deamidase family. Pup-conjugating enzyme subfamily.

The catalysed reaction is ATP + [prokaryotic ubiquitin-like protein]-L-glutamate + [protein]-L-lysine = ADP + phosphate + N(6)-([prokaryotic ubiquitin-like protein]-gamma-L-glutamyl)-[protein]-L-lysine.. It functions in the pathway protein degradation; proteasomal Pup-dependent pathway. Its pathway is protein modification; protein pupylation. In terms of biological role, catalyzes the covalent attachment of the prokaryotic ubiquitin-like protein modifier Pup to the proteasomal substrate proteins, thereby targeting them for proteasomal degradation. This tagging system is termed pupylation. The ligation reaction involves the side-chain carboxylate of the C-terminal glutamate of Pup and the side-chain amino group of a substrate lysine. The chain is Pup--protein ligase from Frankia alni (strain DSM 45986 / CECT 9034 / ACN14a).